We begin with the raw amino-acid sequence, 261 residues long: Probable trans-aconitate 2-methyltransferase (261 aa).

It belongs to the methyltransferase superfamily. Tam family.

The protein resides in the cytoplasm. The enzyme catalyses trans-aconitate + S-adenosyl-L-methionine = (E)-3-(methoxycarbonyl)pent-2-enedioate + S-adenosyl-L-homocysteine. Its function is as follows. Catalyzes the S-adenosylmethionine monomethyl esterification of trans-aconitate. This is Probable trans-aconitate 2-methyltransferase from Mycobacterium bovis (strain ATCC BAA-935 / AF2122/97).